We begin with the raw amino-acid sequence, 229 residues long: Heptaprenylglyceryl phosphate synthase (229 aa).

A sn-glycerol 1-phosphate-binding site is contributed by Lys12. Asp14 and Ser40 together coordinate Mg(2+). Residues 159–164 (YLEYSG), Gly189, and 209–210 (GN) contribute to the sn-glycerol 1-phosphate site.

The protein belongs to the GGGP/HepGP synthase family. Group I subfamily. In terms of assembly, homodimer. Mg(2+) serves as cofactor.

The enzyme catalyses sn-glycerol 1-phosphate + all-trans-heptaprenyl diphosphate = 3-heptaprenyl-sn-glycero-1-phosphate + diphosphate. The protein operates within membrane lipid metabolism; glycerophospholipid metabolism. Its function is as follows. Prenyltransferase that catalyzes in vivo the transfer of the heptaprenyl moiety of heptaprenyl pyrophosphate (HepPP; 35 carbon atoms) to the C3 hydroxyl of sn-glycerol-1-phosphate (G1P), producing heptaprenylglyceryl phosphate (HepGP). This reaction is an ether-bond-formation step in the biosynthesis of archaea-type G1P-based membrane lipids found in Bacillales. This Bacillus cereus (strain ZK / E33L) protein is Heptaprenylglyceryl phosphate synthase.